Here is a 347-residue protein sequence, read N- to C-terminus: Ryncolin-3 (347 aa).

Residues 1-19 (MKPWAAFHLIFLVASSVEG) form the signal peptide. Positions 57–114 (GIPGVPGINGSEGLKGDPGPQGLPGETGFDGIPGVAGPKGDKGDQGDKGDKGDKGDKG) constitute a Collagen-like domain. A disordered region spans residues 62 to 115 (PGINGSEGLKGDPGPQGLPGETGFDGIPGVAGPKGDKGDQGDKGDKGDKGDKGD). Residues 95–115 (KGDKGDQGDKGDKGDKGDKGD) show a composition bias toward basic and acidic residues. The region spanning 121 to 341 (DCPPTDVEVR…YADMKIRPQQ (221 aa)) is the Fibrinogen C-terminal domain. 2 cysteine pairs are disulfide-bonded: C132/C160 and C284/C297.

This sequence belongs to the ficolin lectin family. Veficolin subfamily. Hydroxylated. In terms of tissue distribution, expressed by the venom duct.

It localises to the secreted. In terms of biological role, initiates complement activation and/or interferes in platelet aggregation and/or blood coagulation. The chain is Ryncolin-3 from Cerberus rynchops (Dog-faced water snake).